Consider the following 289-residue polypeptide: Oxaloacetate decarboxylase (289 aa).

S50 is a binding site for substrate. D88 contributes to the Mg(2+) binding site. 2 residues coordinate substrate: R159 and H235.

The protein belongs to the isocitrate lyase family. Oxaloacetate decarboxylase subfamily. In terms of assembly, homotetramer; dimer of dimers. Mg(2+) serves as cofactor.

The catalysed reaction is oxaloacetate + H(+) = pyruvate + CO2. Its function is as follows. Catalyzes the decarboxylation of oxaloacetate into pyruvate. Seems to play a role in maintaining cellular concentrations of bicarbonate and pyruvate. This chain is Oxaloacetate decarboxylase, found in Pseudomonas fluorescens (strain SBW25).